Consider the following 330-residue polypeptide: Fructose-1,6-bisphosphatase class 1 (330 aa).

Positions 84, 103, 105, and 106 each coordinate Mg(2+). Residues 106 to 109 (DGSS), N196, and K262 contribute to the substrate site. E268 contacts Mg(2+).

The protein belongs to the FBPase class 1 family. Homotetramer. Mg(2+) is required as a cofactor.

The protein localises to the cytoplasm. It carries out the reaction beta-D-fructose 1,6-bisphosphate + H2O = beta-D-fructose 6-phosphate + phosphate. Its pathway is carbohydrate biosynthesis; gluconeogenesis. This chain is Fructose-1,6-bisphosphatase class 1, found in Shewanella baltica (strain OS185).